A 346-amino-acid polypeptide reads, in one-letter code: Protein RecA (346 aa).

67-74 (GPESSGKT) is a binding site for ATP.

This sequence belongs to the RecA family.

It localises to the cytoplasm. Functionally, can catalyze the hydrolysis of ATP in the presence of single-stranded DNA, the ATP-dependent uptake of single-stranded DNA by duplex DNA, and the ATP-dependent hybridization of homologous single-stranded DNAs. It interacts with LexA causing its activation and leading to its autocatalytic cleavage. The polypeptide is Protein RecA (Mycobacteroides abscessus (strain ATCC 19977 / DSM 44196 / CCUG 20993 / CIP 104536 / JCM 13569 / NCTC 13031 / TMC 1543 / L948) (Mycobacterium abscessus)).